A 206-amino-acid polypeptide reads, in one-letter code: ATP phosphoribosyltransferase (206 aa).

It belongs to the ATP phosphoribosyltransferase family. Short subfamily. As to quaternary structure, heteromultimer composed of HisG and HisZ subunits.

The protein resides in the cytoplasm. The catalysed reaction is 1-(5-phospho-beta-D-ribosyl)-ATP + diphosphate = 5-phospho-alpha-D-ribose 1-diphosphate + ATP. Its pathway is amino-acid biosynthesis; L-histidine biosynthesis; L-histidine from 5-phospho-alpha-D-ribose 1-diphosphate: step 1/9. Functionally, catalyzes the condensation of ATP and 5-phosphoribose 1-diphosphate to form N'-(5'-phosphoribosyl)-ATP (PR-ATP). Has a crucial role in the pathway because the rate of histidine biosynthesis seems to be controlled primarily by regulation of HisG enzymatic activity. This chain is ATP phosphoribosyltransferase, found in Wolinella succinogenes (strain ATCC 29543 / DSM 1740 / CCUG 13145 / JCM 31913 / LMG 7466 / NCTC 11488 / FDC 602W) (Vibrio succinogenes).